The following is a 154-amino-acid chain: L-alanine exporter AlaE (154 aa).

Helical transmembrane passes span 21 to 41, 51 to 71, 90 to 110, and 115 to 135; these read FAMV…LSGM, LVAI…RDFF, ILAY…VIGA, and IVAA…VYGY.

Belongs to the AlaE exporter family.

It is found in the cell inner membrane. Its function is as follows. Exports L-alanine. The sequence is that of L-alanine exporter AlaE from Escherichia fergusonii (strain ATCC 35469 / DSM 13698 / CCUG 18766 / IAM 14443 / JCM 21226 / LMG 7866 / NBRC 102419 / NCTC 12128 / CDC 0568-73).